The chain runs to 173 residues: Acireductone dioxygenase 1 (173 aa).

Fe(2+) is bound by residues His-96, His-98, Glu-102, and His-140. Ni(2+) contacts are provided by His-96, His-98, Glu-102, and His-140.

It belongs to the acireductone dioxygenase (ARD) family. In terms of assembly, monomer. Fe(2+) is required as a cofactor. It depends on Ni(2+) as a cofactor.

The enzyme catalyses 1,2-dihydroxy-5-(methylsulfanyl)pent-1-en-3-one + O2 = 3-(methylsulfanyl)propanoate + CO + formate + 2 H(+). The catalysed reaction is 1,2-dihydroxy-5-(methylsulfanyl)pent-1-en-3-one + O2 = 4-methylsulfanyl-2-oxobutanoate + formate + 2 H(+). It participates in amino-acid biosynthesis; L-methionine biosynthesis via salvage pathway; L-methionine from S-methyl-5-thio-alpha-D-ribose 1-phosphate: step 5/6. In terms of biological role, catalyzes 2 different reactions between oxygen and the acireductone 1,2-dihydroxy-3-keto-5-methylthiopentene (DHK-MTPene) depending upon the metal bound in the active site. Fe-containing acireductone dioxygenase (Fe-ARD) produces formate and 2-keto-4-methylthiobutyrate (KMTB), the alpha-ketoacid precursor of methionine in the methionine recycle pathway. Ni-containing acireductone dioxygenase (Ni-ARD) produces methylthiopropionate, carbon monoxide and formate, and does not lie on the methionine recycle pathway. The protein is Acireductone dioxygenase 1 of Pectobacterium atrosepticum (strain SCRI 1043 / ATCC BAA-672) (Erwinia carotovora subsp. atroseptica).